The primary structure comprises 434 residues: 3-phosphoshikimate 1-carboxyvinyltransferase (434 aa).

K22, S23, and R27 together coordinate 3-phosphoshikimate. Position 22 (K22) interacts with phosphoenolpyruvate. Phosphoenolpyruvate is bound by residues G93 and R121. The 3-phosphoshikimate site is built by S168, S169, Q170, S199, D320, and K347. Q170 is a phosphoenolpyruvate binding site. D320 acts as the Proton acceptor in catalysis. Phosphoenolpyruvate is bound by residues R351, R394, and K419.

This sequence belongs to the EPSP synthase family. In terms of assembly, monomer.

It is found in the cytoplasm. It carries out the reaction 3-phosphoshikimate + phosphoenolpyruvate = 5-O-(1-carboxyvinyl)-3-phosphoshikimate + phosphate. The protein operates within metabolic intermediate biosynthesis; chorismate biosynthesis; chorismate from D-erythrose 4-phosphate and phosphoenolpyruvate: step 6/7. Functionally, catalyzes the transfer of the enolpyruvyl moiety of phosphoenolpyruvate (PEP) to the 5-hydroxyl of shikimate-3-phosphate (S3P) to produce enolpyruvyl shikimate-3-phosphate and inorganic phosphate. This chain is 3-phosphoshikimate 1-carboxyvinyltransferase, found in Burkholderia ambifaria (strain ATCC BAA-244 / DSM 16087 / CCUG 44356 / LMG 19182 / AMMD) (Burkholderia cepacia (strain AMMD)).